Consider the following 467-residue polypeptide: MDRRKKPLDVTASSLVDLKAELFRKQEEFKQEKLLKDSGVFGKPKTTNKKPSIWSKQNVGVSNRAEKDAEQKIEEQKTLDKAREKLEEKAKLYEKMTKGDFIDEEVEDMYLVDFTQKIIDKRKEMEASGAHRDSQKAGERDDDEENLPEGEIPPPQDPSEEWVDYVDSLGRSRRCMRKDLPDLLEMDKNLQGRLFISPANEKTLLSEDMRKELQRQQWEEEEREALKRPMGPVHYEDIRENEARQLGVGYFAFARDKELRNKQMKTLEMLREQTTDQRTKRENIKEKRKAILEARLAKLRQKKMKKSKEGGTEEENRDGDVIGPLPPEPEAVPTPRPAAQSSKVEVIVQERKDTKPGVPHIREWDRGKEFSFGYWSKRQSDLRAERDPEFAPPSDYFVGQKRTGFSSSQAWSRPGPAQSDPGQCPDQSHGPSPEHTSPTPAPDNPPQAPTVTFKTLDDMISYYKQVT.

Disordered regions lie at residues Val-40–Lys-77 and Glu-124–Trp-162. Positions Asn-63–Gly-99 form a coiled coil. Basic and acidic residues-rich tracts occupy residues Arg-64–Lys-77 and Glu-124–Glu-139. Ser-197 carries the post-translational modification Phosphoserine. A coiled-coil region spans residues Leu-267–Glu-309. 2 disordered regions span residues Leu-299–Glu-363 and Arg-378–Phe-453. Residues Pro-324–Arg-336 show a composition bias toward pro residues. Basic and acidic residues-rich tracts occupy residues Val-348 to Glu-363 and Arg-378 to Glu-389. Residues Pro-425–Ser-437 show a composition bias toward polar residues. Residues Thr-439 to Ala-448 show a composition bias toward pro residues.

In terms of tissue distribution, widely expressed.

The protein localises to the nucleus. Functionally, probably involved in neuronal development. This Homo sapiens (Human) protein is Coiled-coil domain-containing protein 174 (CCDC174).